The sequence spans 316 residues: 1-aminocyclopropane-1-carboxylate oxidase 2 (316 aa).

Positions 153 to 253 (PNFGTKVSNY…RMSLASFYNP (101 aa)) constitute a Fe2OG dioxygenase domain. 3 residues coordinate Fe cation: His177, Asp179, and His234.

It belongs to the iron/ascorbate-dependent oxidoreductase family. Fe cation serves as cofactor. In terms of tissue distribution, leaves.

It carries out the reaction 1-aminocyclopropane-1-carboxylate + L-ascorbate + O2 = ethene + L-dehydroascorbate + hydrogen cyanide + CO2 + 2 H2O. It functions in the pathway alkene biosynthesis; ethylene biosynthesis via S-adenosyl-L-methionine; ethylene from S-adenosyl-L-methionine: step 2/2. This is 1-aminocyclopropane-1-carboxylate oxidase 2 (ACO2) from Solanum lycopersicum (Tomato).